Here is a 207-residue protein sequence, read N- to C-terminus: MAEDLDELLDEVESKFCRPDPLRLGTVERPRGGGGGFFGHDQNRAEAKENLRSAETFEKEDDLDSLINEIFEEPHFDKKHFKLKSKSSGNTSVRASIQGLGKSCSPVYIGGSTVPCGIGTNASPRACDHLRCTACDFWVESYDDYRWDKSCDYLFFRNNMPEFHKLKTKLVKKKGTRAYACQCSWKAVEELTDLQTDHQLRWVCGKH.

Residues 1 to 75 (MAEDLDELLD…LINEIFEEPH (75 aa)) form a required for interaction with FAM161A region.

Interacts (via N-terminus) with FAM161A (via central region); the interaction is direct. In terms of tissue distribution, expressed in the retina (at protein level).

It localises to the cytoplasm. The protein resides in the photoreceptor inner segment. In terms of biological role, may be involved in photoreceptor outer segment disk morphogenesis. In Bos taurus (Bovine), this protein is Cilia- and flagella-associated protein 418 (CFAP418).